The following is a 311-amino-acid chain: Probable lipid kinase YegS-like (311 aa).

Residues 9–140 (EHDGDTWLIL…VDVGTLGDDY (132 aa)) enclose the DAGKc domain. Residues Thr47, 73–79 (GDGTVNE), and Ser102 each bind ATP. Residues Lys221, Asp224, and Leu226 each contribute to the Mg(2+) site. The active-site Proton acceptor is the Glu281.

This sequence belongs to the diacylglycerol/lipid kinase family. YegS lipid kinase subfamily. Requires Mg(2+) as cofactor. The cofactor is Ca(2+).

It localises to the cytoplasm. In terms of biological role, probably phosphorylates lipids; the in vivo substrate is unknown. The polypeptide is Probable lipid kinase YegS-like (Chromohalobacter salexigens (strain ATCC BAA-138 / DSM 3043 / CIP 106854 / NCIMB 13768 / 1H11)).